A 159-amino-acid chain; its full sequence is Olfactory receptor-like protein COR8 (159 aa).

At 1 to 16 (VAICNPLLYTISMPKS) the chain is on the cytoplasmic side. Residues 17 to 41 (LCMKLVAGSYLGGVLNSLTQTCCLL) traverse the membrane as a helical segment. Residues 42–82 (PLPFCGPNVINHYFCDTNPLLKLTCSDGRLNELLLVTFNGT) lie on the Extracellular side of the membrane. Residue Asn-80 is glycosylated (N-linked (GlcNAc...) asparagine). Residues 83–103 (ISMTVLLIIVISYVYILVSIL) form a helical membrane-spanning segment. Topologically, residues 104 to 116 (SIRSARGRHKAFS) are cytoplasmic. The helical transmembrane segment at 117–137 (TCASHLLTVTLFYVPAGLSHM) threads the bilayer. The Extracellular portion of the chain corresponds to 138-148 (QPGSKYSLDME). The helical transmembrane segment at 149–159 (KVTAVFYTLLV) threads the bilayer.

This sequence belongs to the G-protein coupled receptor 1 family.

The protein localises to the cell membrane. Its function is as follows. Odorant receptor. This is Olfactory receptor-like protein COR8 (COR8) from Gallus gallus (Chicken).